The following is a 151-amino-acid chain: Transcriptional repressor NrdR (151 aa).

Residues 3-34 fold into a zinc finger; the sequence is CPFCHNDQSRVIDSRVIDSGSAIRRRRECTQC. An ATP-cone domain is found at 46–136; the sequence is LLVVKRNGLT…VYKSFESADD (91 aa).

It belongs to the NrdR family. Zn(2+) is required as a cofactor.

Its function is as follows. Negatively regulates transcription of bacterial ribonucleotide reductase nrd genes and operons by binding to NrdR-boxes. The polypeptide is Transcriptional repressor NrdR (Corynebacterium diphtheriae (strain ATCC 700971 / NCTC 13129 / Biotype gravis)).